We begin with the raw amino-acid sequence, 307 residues long: Small ribosomal subunit protein uS5m (307 aa).

The transit peptide at 1–13 (MFKRQLSTSVRYL) directs the protein to the mitochondrion. In terms of domain architecture, S5 DRBM spans 144 to 208 (LTMKPLVMKR…WDAVRNLKEI (65 aa)).

It belongs to the universal ribosomal protein uS5 family. In terms of assembly, component of the mitochondrial small ribosomal subunit (mt-SSU). Mature yeast 74S mitochondrial ribosomes consist of a small (37S) and a large (54S) subunit. The 37S small subunit contains a 15S ribosomal RNA (15S mt-rRNA) and 34 different proteins. The 54S large subunit contains a 21S rRNA (21S mt-rRNA) and 46 different proteins. uS3m, uS4m and uS5m form the narrow entry site of the mRNA channel.

It localises to the mitochondrion. In terms of biological role, component of the mitochondrial ribosome (mitoribosome), a dedicated translation machinery responsible for the synthesis of mitochondrial genome-encoded proteins, including at least some of the essential transmembrane subunits of the mitochondrial respiratory chain. The mitoribosomes are attached to the mitochondrial inner membrane and translation products are cotranslationally integrated into the membrane. The protein is Small ribosomal subunit protein uS5m (MRPS5) of Saccharomyces cerevisiae (strain ATCC 204508 / S288c) (Baker's yeast).